A 95-amino-acid chain; its full sequence is Small ribosomal subunit protein bS18 (95 aa).

This sequence belongs to the bacterial ribosomal protein bS18 family. In terms of assembly, part of the 30S ribosomal subunit. Forms a tight heterodimer with protein bS6.

In terms of biological role, binds as a heterodimer with protein bS6 to the central domain of the 16S rRNA, where it helps stabilize the platform of the 30S subunit. This Rickettsia prowazekii (strain Madrid E) protein is Small ribosomal subunit protein bS18.